A 208-amino-acid polypeptide reads, in one-letter code: Small ribosomal subunit protein uS4 (208 aa).

Residues 95 to 159 (RRIDNIVYRA…FKKLVRSNIE (65 aa)) form the S4 RNA-binding domain.

Belongs to the universal ribosomal protein uS4 family. In terms of assembly, part of the 30S ribosomal subunit. Contacts protein S5. The interaction surface between S4 and S5 is involved in control of translational fidelity.

One of the primary rRNA binding proteins, it binds directly to 16S rRNA where it nucleates assembly of the body of the 30S subunit. In terms of biological role, with S5 and S12 plays an important role in translational accuracy. The polypeptide is Small ribosomal subunit protein uS4 (Borrelia recurrentis (strain A1)).